Here is a 264-residue protein sequence, read N- to C-terminus: NAD kinase (264 aa).

Catalysis depends on D45, which acts as the Proton acceptor. NAD(+) contacts are provided by residues 45 to 46, H50, 121 to 122, R147, D149, A184, and Q224; these read DG and NE.

This sequence belongs to the NAD kinase family. A divalent metal cation is required as a cofactor.

Its subcellular location is the cytoplasm. It carries out the reaction NAD(+) + ATP = ADP + NADP(+) + H(+). In terms of biological role, involved in the regulation of the intracellular balance of NAD and NADP, and is a key enzyme in the biosynthesis of NADP. Catalyzes specifically the phosphorylation on 2'-hydroxyl of the adenosine moiety of NAD to yield NADP. This is NAD kinase from Lysinibacillus sphaericus (strain C3-41).